The sequence spans 799 residues: ATP-dependent DNA helicase Hel308 (799 aa).

ATP-binding positions include Q29 and 47-54 (IPTASGKT). In terms of domain architecture, Helicase ATP-binding spans 34 to 200 (EAGVTEGENL…WLDAGLVDSD (167 aa)). Positions 145–148 (DEVH) match the DEAH box motif. In terms of domain architecture, Helicase C-terminal spans 234-435 (QTAAIVRDTL…EPALRTHILA (202 aa)). 2 disordered regions span residues 522 to 566 (RGAS…DRDP) and 750 to 799 (NVLE…LGDF). Positions 553–566 (LAEDADESDADRDP) are enriched in acidic residues.

It belongs to the helicase family. Hel308 subfamily. Monomer.

The enzyme catalyses Couples ATP hydrolysis with the unwinding of duplex DNA by translocating in the 3'-5' direction.. It carries out the reaction ATP + H2O = ADP + phosphate + H(+). DNA-dependent ATPase and 3'-5' DNA helicase that may be involved in repair of stalled replication forks. This is ATP-dependent DNA helicase Hel308 from Haloarcula marismortui (strain ATCC 43049 / DSM 3752 / JCM 8966 / VKM B-1809) (Halobacterium marismortui).